A 253-amino-acid polypeptide reads, in one-letter code: NADH-quinone oxidoreductase subunit C (253 aa).

Disordered stretches follow at residues 1–33 (MSPDTPRGGDLHPPEPDAAATAGPEGTPPDTEP) and 234–253 (IPVEYKGARIPPPDERRAYS).

It belongs to the complex I 30 kDa subunit family. As to quaternary structure, NDH-1 is composed of 14 different subunits. Subunits NuoB, C, D, E, F, and G constitute the peripheral sector of the complex.

It localises to the cell membrane. The catalysed reaction is a quinone + NADH + 5 H(+)(in) = a quinol + NAD(+) + 4 H(+)(out). Functionally, NDH-1 shuttles electrons from NADH, via FMN and iron-sulfur (Fe-S) centers, to quinones in the respiratory chain. The immediate electron acceptor for the enzyme in this species is believed to be a menaquinone. Couples the redox reaction to proton translocation (for every two electrons transferred, four hydrogen ions are translocated across the cytoplasmic membrane), and thus conserves the redox energy in a proton gradient. In Nocardia farcinica (strain IFM 10152), this protein is NADH-quinone oxidoreductase subunit C.